A 111-amino-acid chain; its full sequence is Probable 4-amino-4-deoxy-L-arabinose-phosphoundecaprenol flippase subunit ArnE (111 aa).

Helical transmembrane passes span 39–59, 61–81, and 89–109; these read WLAI…WVLQ, VPVG…TLAA, and VSLR…CMGV. One can recognise an EamA domain in the interval 40 to 109; sequence LAISLLLLGG…IVAGVMCMGV (70 aa).

Belongs to the ArnE family. As to quaternary structure, heterodimer of ArnE and ArnF.

The protein resides in the cell inner membrane. The protein operates within bacterial outer membrane biogenesis; lipopolysaccharide biosynthesis. In terms of biological role, translocates 4-amino-4-deoxy-L-arabinose-phosphoundecaprenol (alpha-L-Ara4N-phosphoundecaprenol) from the cytoplasmic to the periplasmic side of the inner membrane. The chain is Probable 4-amino-4-deoxy-L-arabinose-phosphoundecaprenol flippase subunit ArnE from Sodalis glossinidius (strain morsitans).